A 155-amino-acid polypeptide reads, in one-letter code: SsrA-binding protein (155 aa).

The protein belongs to the SmpB family.

The protein localises to the cytoplasm. Functionally, required for rescue of stalled ribosomes mediated by trans-translation. Binds to transfer-messenger RNA (tmRNA), required for stable association of tmRNA with ribosomes. tmRNA and SmpB together mimic tRNA shape, replacing the anticodon stem-loop with SmpB. tmRNA is encoded by the ssrA gene; the 2 termini fold to resemble tRNA(Ala) and it encodes a 'tag peptide', a short internal open reading frame. During trans-translation Ala-aminoacylated tmRNA acts like a tRNA, entering the A-site of stalled ribosomes, displacing the stalled mRNA. The ribosome then switches to translate the ORF on the tmRNA; the nascent peptide is terminated with the 'tag peptide' encoded by the tmRNA and targeted for degradation. The ribosome is freed to recommence translation, which seems to be the essential function of trans-translation. The protein is SsrA-binding protein of Streptococcus pyogenes serotype M5 (strain Manfredo).